The following is a 602-amino-acid chain: Aspartate--tRNA(Asp/Asn) ligase (602 aa).

L-aspartate is bound at residue glutamate 175. Residues 199-202 (QIFK) form an aspartate region. Arginine 221 contributes to the L-aspartate binding site. Residues 221 to 223 (RDE) and glutamine 230 contribute to the ATP site. Histidine 458 is an L-aspartate binding site. Residue glutamate 492 participates in ATP binding. Arginine 499 contributes to the L-aspartate binding site. 544-547 (GLDR) contacts ATP.

Belongs to the class-II aminoacyl-tRNA synthetase family. Type 1 subfamily. Homodimer.

It is found in the cytoplasm. It catalyses the reaction tRNA(Asx) + L-aspartate + ATP = L-aspartyl-tRNA(Asx) + AMP + diphosphate. Aspartyl-tRNA synthetase with relaxed tRNA specificity since it is able to aspartylate not only its cognate tRNA(Asp) but also tRNA(Asn). Reaction proceeds in two steps: L-aspartate is first activated by ATP to form Asp-AMP and then transferred to the acceptor end of tRNA(Asp/Asn). The protein is Aspartate--tRNA(Asp/Asn) ligase of Cupriavidus taiwanensis (strain DSM 17343 / BCRC 17206 / CCUG 44338 / CIP 107171 / LMG 19424 / R1) (Ralstonia taiwanensis (strain LMG 19424)).